The sequence spans 288 residues: MSNKQHRVPDFYCSYLLRSIPKPNSFYIGSSPDPVRRLRQHNGAVRRGGAYRTKRNGTRPWKMVCFIYGFTSKIAALQFEHAWQHSYKTRFIENNERLVTKKNTRNGIATKLGNARLLMKHPYFDKMNLHIRFFDRLAWESWELNKFKVDYGLSLCEVDEAVLTDESQLDELDELNLERIKAFYEDQMAQESSLLQRYQDNLTYDQKSCMICDKKIDYIHDEGTQMVGFCSDDECDFLSCLSCLYKEFTKNSKQIIPKSGHCPNCHKCLEWSQIVKYSTVLREKLIKD.

The 84-residue stretch at 10–93 folds into the GIY-YIG domain; the sequence is DFYCSYLLRS…QHSYKTRFIE (84 aa). The segment at 209-265 adopts an SLX1-type zinc-finger fold; the sequence is CMICDKKIDYIHDEGTQMVGFCSDDECDFLSCLSCLYKEFTKNSKQIIPKSGHCPNC.

The protein belongs to the SLX1 family. In terms of assembly, forms a heterodimer with SLX4. It depends on a divalent metal cation as a cofactor.

The protein localises to the nucleus. Its function is as follows. Catalytic subunit of the SLX1-SLX4 structure-specific endonuclease that resolves DNA secondary structures generated during DNA repair and recombination. Has endonuclease activity towards branched DNA substrates, introducing single-strand cuts in duplex DNA close to junctions with ss-DNA. This is Structure-specific endonuclease subunit SLX1 from Kluyveromyces lactis (strain ATCC 8585 / CBS 2359 / DSM 70799 / NBRC 1267 / NRRL Y-1140 / WM37) (Yeast).